A 215-amino-acid polypeptide reads, in one-letter code: Adenylate kinase (215 aa).

Glycine 10–threonine 15 is a binding site for ATP. The NMP stretch occupies residues serine 30–valine 59. Residues threonine 31, arginine 36, glycine 57 to valine 59, glycine 85 to arginine 88, and glutamine 92 contribute to the AMP site. An LID region spans residues glycine 122 to aspartate 159. ATP-binding positions include arginine 123 and valine 132–tyrosine 133. Arginine 156 and arginine 167 together coordinate AMP. Glycine 201 contacts ATP.

The protein belongs to the adenylate kinase family. As to quaternary structure, monomer.

The protein localises to the cytoplasm. The enzyme catalyses AMP + ATP = 2 ADP. The protein operates within purine metabolism; AMP biosynthesis via salvage pathway; AMP from ADP: step 1/1. Its function is as follows. Catalyzes the reversible transfer of the terminal phosphate group between ATP and AMP. Plays an important role in cellular energy homeostasis and in adenine nucleotide metabolism. This Azotobacter vinelandii (strain DJ / ATCC BAA-1303) protein is Adenylate kinase.